A 381-amino-acid polypeptide reads, in one-letter code: GDP-mannose transporter (381 aa).

At 1–39 the chain is on the cytoplasmic side; the sequence is MVESKKTDDYAIEMDKIDQGSKNFEAAAPPQPRSVPSSS. A helical transmembrane segment spans residues 40–60; the sequence is LSGNPVLPVLAYCGSSILMTV. Topologically, residues 61 to 68 are lumenal; the sequence is MNKYVLSG. The chain crosses the membrane as a helical span at residues 69-89; that stretch reads LDFNLNFFLLCVQSIVCIIAI. At 90–109 the chain is on the cytoplasmic side; sequence QTCKFCGLITYRDFSADEAK. Residues 110–126 traverse the membrane as a helical segment; it reads KWFPISLLLIGMIYTGS. Topologically, residues 127–133 are lumenal; sequence KALQFLS. The helical transmembrane segment at 134 to 150 threads the bilayer; the sequence is IPVYTIFKNLTIILIAY. The Cytoplasmic segment spans residues 151 to 159; it reads GEVLWFGGS. A helical transmembrane segment spans residues 160–181; sequence VTGLTLFSFGLMVLSSIIAAWA. Residues 182–199 are Lumenal-facing; the sequence is DIKHAVESSGDTSAQVST. A helical transmembrane segment spans residues 200-220; it reads LNAGYIWMLINCLCTSSYVLG. Residues 221–232 lie on the Cytoplasmic side of the membrane; it reads MRKRIKLTNFKD. The chain crosses the membrane as a helical span at residues 233-253; it reads FDTMFYNNLLSIPVLVVLTGL. The Lumenal portion of the chain corresponds to 254–273; that stretch reads MEDWSSANIDRNFPQADRSS. A helical membrane pass occupies residues 274 to 294; the sequence is IMFAMILSGLSSVFISYTSAW. The Cytoplasmic portion of the chain corresponds to 295–302; the sequence is CVRVTSST. The chain crosses the membrane as a helical span at residues 303–323; that stretch reads TYSMVGALNKLPIALSGLIFF. The Lumenal segment spans residues 324–326; that stretch reads DAP. Residues 327–347 traverse the membrane as a helical segment; it reads VTFPSVSAIAVGFVSGIVYAI. Over 348-381 the chain is Cytoplasmic; it reads AKIKQNAKPKTGVLPTSNPLVSASSQSMRDSLRS.

It belongs to the TPT transporter family. SLC35D subfamily. As to quaternary structure, homooligomer.

It is found in the golgi apparatus membrane. It localises to the cytoplasmic vesicle membrane. The protein resides in the endoplasmic reticulum membrane. In terms of biological role, involved in the import of GDP-mannose from the cytoplasm into the Golgi lumen. This is GDP-mannose transporter (gmt1) from Aspergillus oryzae (strain ATCC 42149 / RIB 40) (Yellow koji mold).